The following is a 227-amino-acid chain: Cytochrome c oxidase subunit 2 (227 aa).

The Mitochondrial intermembrane segment spans residues 1–14 (MAYPFQLGFQDASS). A helical membrane pass occupies residues 15–45 (PIMEELLHFHDHTLMIVFLISSLVLYIISLM). The Mitochondrial matrix segment spans residues 46-59 (LTTKLTHTSTMDAQ). Residues 60 to 87 (EVETIWTILPAIILILIALPSLRILYMM) traverse the membrane as a helical segment. Residues 88–227 (DEINNPSLTV…HFENWSLSMI (140 aa)) are Mitochondrial intermembrane-facing. The Cu cation site is built by His-161, Cys-196, Glu-198, Cys-200, His-204, and Met-207. Glu-198 contributes to the Mg(2+) binding site.

Belongs to the cytochrome c oxidase subunit 2 family. As to quaternary structure, component of the cytochrome c oxidase (complex IV, CIV), a multisubunit enzyme composed of 14 subunits. The complex is composed of a catalytic core of 3 subunits MT-CO1, MT-CO2 and MT-CO3, encoded in the mitochondrial DNA, and 11 supernumerary subunits COX4I, COX5A, COX5B, COX6A, COX6B, COX6C, COX7A, COX7B, COX7C, COX8 and NDUFA4, which are encoded in the nuclear genome. The complex exists as a monomer or a dimer and forms supercomplexes (SCs) in the inner mitochondrial membrane with NADH-ubiquinone oxidoreductase (complex I, CI) and ubiquinol-cytochrome c oxidoreductase (cytochrome b-c1 complex, complex III, CIII), resulting in different assemblies (supercomplex SCI(1)III(2)IV(1) and megacomplex MCI(2)III(2)IV(2)). Found in a complex with TMEM177, COA6, COX18, COX20, SCO1 and SCO2. Interacts with TMEM177 in a COX20-dependent manner. Interacts with COX20. Interacts with COX16. Cu cation is required as a cofactor.

The protein localises to the mitochondrion inner membrane. The catalysed reaction is 4 Fe(II)-[cytochrome c] + O2 + 8 H(+)(in) = 4 Fe(III)-[cytochrome c] + 2 H2O + 4 H(+)(out). Functionally, component of the cytochrome c oxidase, the last enzyme in the mitochondrial electron transport chain which drives oxidative phosphorylation. The respiratory chain contains 3 multisubunit complexes succinate dehydrogenase (complex II, CII), ubiquinol-cytochrome c oxidoreductase (cytochrome b-c1 complex, complex III, CIII) and cytochrome c oxidase (complex IV, CIV), that cooperate to transfer electrons derived from NADH and succinate to molecular oxygen, creating an electrochemical gradient over the inner membrane that drives transmembrane transport and the ATP synthase. Cytochrome c oxidase is the component of the respiratory chain that catalyzes the reduction of oxygen to water. Electrons originating from reduced cytochrome c in the intermembrane space (IMS) are transferred via the dinuclear copper A center (CU(A)) of subunit 2 and heme A of subunit 1 to the active site in subunit 1, a binuclear center (BNC) formed by heme A3 and copper B (CU(B)). The BNC reduces molecular oxygen to 2 water molecules using 4 electrons from cytochrome c in the IMS and 4 protons from the mitochondrial matrix. This is Cytochrome c oxidase subunit 2 (MT-CO2) from Oryctolagus cuniculus (Rabbit).